A 148-amino-acid chain; its full sequence is UPF0540 protein At1g62000 (148 aa).

An N-terminal signal peptide occupies residues 1–21; sequence MNATKFVVLLVIGILCAIVTA. Positions 123–132 are enriched in low complexity; it reads RANGKVASAS. Residues 123-148 are disordered; that stretch reads RANGKVASASRVKGSSEKKKGKGKKD.

The protein belongs to the UPF0540 family.

The polypeptide is UPF0540 protein At1g62000 (Arabidopsis thaliana (Mouse-ear cress)).